Here is a 217-residue protein sequence, read N- to C-terminus: Imidazole glycerol phosphate synthase subunit HisH (217 aa).

The Glutamine amidotransferase type-1 domain occupies 3 to 217; sequence TIAIVDYGMG…IYRNFVHWKP (215 aa). C82 (nucleophile) is an active-site residue. Residues H197 and E199 contribute to the active site.

Heterodimer of HisH and HisF.

The protein resides in the cytoplasm. It carries out the reaction 5-[(5-phospho-1-deoxy-D-ribulos-1-ylimino)methylamino]-1-(5-phospho-beta-D-ribosyl)imidazole-4-carboxamide + L-glutamine = D-erythro-1-(imidazol-4-yl)glycerol 3-phosphate + 5-amino-1-(5-phospho-beta-D-ribosyl)imidazole-4-carboxamide + L-glutamate + H(+). The catalysed reaction is L-glutamine + H2O = L-glutamate + NH4(+). Its pathway is amino-acid biosynthesis; L-histidine biosynthesis; L-histidine from 5-phospho-alpha-D-ribose 1-diphosphate: step 5/9. In terms of biological role, IGPS catalyzes the conversion of PRFAR and glutamine to IGP, AICAR and glutamate. The HisH subunit catalyzes the hydrolysis of glutamine to glutamate and ammonia as part of the synthesis of IGP and AICAR. The resulting ammonia molecule is channeled to the active site of HisF. The polypeptide is Imidazole glycerol phosphate synthase subunit HisH (Ralstonia nicotianae (strain ATCC BAA-1114 / GMI1000) (Ralstonia solanacearum)).